A 194-amino-acid polypeptide reads, in one-letter code: uncharacterized protein (194 aa).

Positions R20–I185 constitute an Exonuclease domain.

This is an uncharacterized protein from Escherichia coli (Bacteriophage 186).